The sequence spans 273 residues: NADPH-dependent 7-cyano-7-deazaguanine reductase (273 aa).

80 to 82 (VES) lines the substrate pocket. Position 82–83 (82–83 (SK)) interacts with NADPH. Residue Cys180 is the Thioimide intermediate of the active site. Residue Asp187 is the Proton donor of the active site. 219–220 (HE) serves as a coordination point for substrate. 248-249 (RG) provides a ligand contact to NADPH.

The protein belongs to the GTP cyclohydrolase I family. QueF type 2 subfamily. As to quaternary structure, homodimer.

Its subcellular location is the cytoplasm. The enzyme catalyses 7-aminomethyl-7-carbaguanine + 2 NADP(+) = 7-cyano-7-deazaguanine + 2 NADPH + 3 H(+). Its pathway is tRNA modification; tRNA-queuosine biosynthesis. In terms of biological role, catalyzes the NADPH-dependent reduction of 7-cyano-7-deazaguanine (preQ0) to 7-aminomethyl-7-deazaguanine (preQ1). The protein is NADPH-dependent 7-cyano-7-deazaguanine reductase of Bordetella bronchiseptica (strain ATCC BAA-588 / NCTC 13252 / RB50) (Alcaligenes bronchisepticus).